The primary structure comprises 270 residues: Beta carbonic anhydrase 1 (270 aa).

Residues cysteine 39, aspartate 41, histidine 105, and cysteine 108 each contribute to the Zn(2+) site.

Belongs to the beta-class carbonic anhydrase family. In terms of assembly, oligomer. The cofactor is Zn(2+).

The catalysed reaction is hydrogencarbonate + H(+) = CO2 + H2O. Functionally, reversible hydration of carbon dioxide. This Caenorhabditis elegans protein is Beta carbonic anhydrase 1 (bca-1).